The sequence spans 155 residues: Small ribosomal subunit protein uS7cz/uS7cy (155 aa).

Belongs to the universal ribosomal protein uS7 family. In terms of assembly, part of the 30S ribosomal subunit.

It is found in the plastid. The protein localises to the chloroplast. Its function is as follows. One of the primary rRNA binding proteins, it binds directly to 16S rRNA where it nucleates assembly of the head domain of the 30S subunit. The sequence is that of Small ribosomal subunit protein uS7cz/uS7cy (rps7-A) from Ipomoea purpurea (Common morning glory).